The following is a 1179-amino-acid chain: Integrin alpha-1 (1179 aa).

Residues 1–28 form the signal peptide; that stretch reads MAPRPRARPGVAVACCWLLTVVLRCCVS. Residues 29–1141 lie on the Extracellular side of the membrane; sequence FNVDVKNSMT…SKDGLPGRVP (1113 aa). One copy of the FG-GAP 1 repeat lies at 30–91; that stretch reads NVDVKNSMTF…CPVGRGESLP (62 aa). The N-linked (GlcNAc...) asparagine glycan is linked to asparagine 74. Cysteine 82 and cysteine 92 form a disulfide bridge. 9 N-linked (GlcNAc...) asparagine glycosylation sites follow: asparagine 100, asparagine 105, asparagine 112, asparagine 217, asparagine 317, asparagine 341, asparagine 402, asparagine 418, and asparagine 460. Residues 101–160 form an FG-GAP 2 repeat; that stretch reads TSIPNVTEVKENMTFGSTLVTNPNGGFLACGPLYAYRCGHLHYTTGICSDVSPTFQVVNS. One can recognise a VWFA domain in the interval 161–360; the sequence is IAPVQECSTQ…IVKTLGERIF (200 aa). One copy of the FG-GAP 3 repeat lies at 365 to 417; sequence TADQSAASFEMEMSQTGFSAHYSQDWVMLGAVGAYDWNGTVVMQKASQIIIPR. 4 FG-GAP repeats span residues 422–475, 476–538, 557–615, and 619–679; these read NVES…DGNI, KILQ…RFEY, SCTT…TIRK, and QRIP…FEPN. Ca(2+) is bound by residues aspartate 498, aspartate 500, aspartate 502, and aspartate 506. Residue asparagine 532 is glycosylated (N-linked (GlcNAc...) asparagine). Positions 580, 582, 584, 588, 642, 644, 646, and 650 each coordinate Ca(2+). Cysteines 688 and 697 form a disulfide. Asparagine 699, asparagine 748, and asparagine 780 each carry an N-linked (GlcNAc...) asparagine glycan. Cysteines 703 and 756 form a disulfide. Residues cysteine 808 and cysteine 814 are joined by a disulfide bond. Residues asparagine 840, asparagine 883, asparagine 908, asparagine 915, asparagine 939, asparagine 966, asparagine 974, and asparagine 1008 are each glycosylated (N-linked (GlcNAc...) asparagine). A disulfide bridge links cysteine 878 with cysteine 886. Cystine bridges form between cysteine 1030–cysteine 1062 and cysteine 1065–cysteine 1072. Residues asparagine 1073, asparagine 1083, asparagine 1102, and asparagine 1113 are each glycosylated (N-linked (GlcNAc...) asparagine). The chain crosses the membrane as a helical span at residues 1142-1164; that stretch reads LWVILLSAFAGLLLLMLLILALW. Over 1165–1179 the chain is Cytoplasmic; that stretch reads KIGFFKRPLKKKMEK. The short motif at 1167–1171 is the GFFKR motif element; that stretch reads GFFKR.

The protein belongs to the integrin alpha chain family. As to quaternary structure, heterodimer of an alpha and a beta subunit. Alpha-1 associates with beta-1. Interacts with RAB21. Interacts (via cytoplasmic domain) with PTPN2; activates PTPN2 phosphatase activity towards EGFR and negatively regulates EGF signaling.

It localises to the membrane. Functionally, integrin alpha-1/beta-1 is a receptor for laminin and collagen. It recognizes the proline-hydroxylated sequence G-F-P-G-E-R in collagen. Involved in anchorage-dependent, negative regulation of EGF-stimulated cell growth. This chain is Integrin alpha-1 (ITGA1), found in Homo sapiens (Human).